The sequence spans 352 residues: Fe(3+) ions import ATP-binding protein FbpC (352 aa).

Positions 5-239 (LHIGHLSKSF…PADLDAVLFI (235 aa)) constitute an ABC transporter domain. Position 37–44 (37–44 (GASGCGKT)) interacts with ATP.

The protein belongs to the ABC transporter superfamily. Fe(3+) ion importer (TC 3.A.1.10) family. In terms of assembly, the complex is composed of two ATP-binding proteins (FbpC), two transmembrane proteins (FbpB) and a solute-binding protein (FbpA).

Its subcellular location is the cell inner membrane. The catalysed reaction is Fe(3+)(out) + ATP + H2O = Fe(3+)(in) + ADP + phosphate + H(+). Part of the ABC transporter complex FbpABC involved in Fe(3+) ions import. Responsible for energy coupling to the transport system. This Neisseria gonorrhoeae protein is Fe(3+) ions import ATP-binding protein FbpC.